The sequence spans 411 residues: MKMVLSQRQREELNQAIADYLGSNGYADSLETFRKEADLSTEVEKKFGGLLEKKWTSVIRLQKKVMELEAKLTEAEKEVIEGAPTKNKRTPGEWIPRPPEKFSLTGHRASITRVIFHPIFALMVSASEDATIRIWDFETGEYERSLKGHTDSVQDVAFDAQGKLLASCSADLSIKLWDFQQSYECIKTMHGHDHNVSSVAFVPAGDYVLSASRDRTIKMWEVATGYCVKTYTGHREWVRMVRVHIEGSIFATCSNDQTIRVWLTNSKDCKVELRDHEHTVECIAWAPEAAASAINEAAGADNKKGHHQGPFLASGSRDKTIRIWDVSVGLCLLTLSGHDNWVRGLAFHPGGKYLVSASDDKTIRVWDLRNKRCMKTLYAHQHFCTSIDFHKAHPYVISGSVDQTVKVWECR.

Residues Q9–T41 enclose the LisH domain. A coiled-coil region spans residues T56 to A83. WD repeat units follow at residues G106–K147, G148–K187, G191–T230, G233–E272, D275–T334, G337–T376, and A379–R411.

The protein belongs to the WD repeat LIS1/nudF family.

Its subcellular location is the cytoplasm. The protein localises to the cytoskeleton. It localises to the microtubule organizing center. The protein resides in the centrosome. In terms of biological role, positively regulates the activity of the minus-end directed microtubule motor protein dynein. May enhance dynein-mediated microtubule sliding by targeting dynein to the microtubule plus end. Required for several dynein- and microtubule-dependent processes. In Drosophila sechellia (Fruit fly), this protein is Lissencephaly-1 homolog.